The primary structure comprises 422 residues: Elongation factor 1-alpha (422 aa).

Positions 5-221 (KPHQNLAVIG…NDLPEPQPPT (217 aa)) constitute a tr-type G domain. The tract at residues 14-21 (GHVDHGKS) is G1. 14–21 (GHVDHGKS) is a GTP binding site. Residue Ser-21 participates in Mg(2+) binding. The segment at 70–74 (GVTID) is G2. The interval 91-94 (DCPG) is G3. Residues 91–95 (DCPGH) and 146–149 (NKMD) each bind GTP. The segment at 146–149 (NKMD) is G4. The tract at residues 185 to 187 (SAF) is G5.

It belongs to the TRAFAC class translation factor GTPase superfamily. Classic translation factor GTPase family. EF-Tu/EF-1A subfamily.

The protein localises to the cytoplasm. The catalysed reaction is GTP + H2O = GDP + phosphate + H(+). GTP hydrolase that promotes the GTP-dependent binding of aminoacyl-tRNA to the A-site of ribosomes during protein biosynthesis. The chain is Elongation factor 1-alpha from Natronomonas pharaonis (strain ATCC 35678 / DSM 2160 / CIP 103997 / JCM 8858 / NBRC 14720 / NCIMB 2260 / Gabara) (Halobacterium pharaonis).